An 859-amino-acid chain; its full sequence is Leucine--tRNA ligase (859 aa).

The 'HIGH' region motif lies at 42-52 (PYPSGRLHMGH). The 'KMSKS' region signature appears at 618–622 (KMSKS). Lys621 lines the ATP pocket.

Belongs to the class-I aminoacyl-tRNA synthetase family.

Its subcellular location is the cytoplasm. The enzyme catalyses tRNA(Leu) + L-leucine + ATP = L-leucyl-tRNA(Leu) + AMP + diphosphate. The protein is Leucine--tRNA ligase of Shewanella pealeana (strain ATCC 700345 / ANG-SQ1).